Here is a 122-residue protein sequence, read N- to C-terminus: Small ribosomal subunit protein uS13 (122 aa).

The segment at 99–122 (RGQRTHTNARTRKGPAKAIAGKKK) is disordered.

The protein belongs to the universal ribosomal protein uS13 family. Part of the 30S ribosomal subunit. Forms a loose heterodimer with protein S19. Forms two bridges to the 50S subunit in the 70S ribosome.

In terms of biological role, located at the top of the head of the 30S subunit, it contacts several helices of the 16S rRNA. In the 70S ribosome it contacts the 23S rRNA (bridge B1a) and protein L5 of the 50S subunit (bridge B1b), connecting the 2 subunits; these bridges are implicated in subunit movement. Contacts the tRNAs in the A and P-sites. The sequence is that of Small ribosomal subunit protein uS13 from Allorhizobium ampelinum (strain ATCC BAA-846 / DSM 112012 / S4) (Agrobacterium vitis (strain S4)).